The sequence spans 374 residues: Aminomethyltransferase (374 aa).

The protein belongs to the GcvT family. The glycine cleavage system is composed of four proteins: P, T, L and H.

It carries out the reaction N(6)-[(R)-S(8)-aminomethyldihydrolipoyl]-L-lysyl-[protein] + (6S)-5,6,7,8-tetrahydrofolate = N(6)-[(R)-dihydrolipoyl]-L-lysyl-[protein] + (6R)-5,10-methylene-5,6,7,8-tetrahydrofolate + NH4(+). The glycine cleavage system catalyzes the degradation of glycine. The protein is Aminomethyltransferase of Caldanaerobacter subterraneus subsp. tengcongensis (strain DSM 15242 / JCM 11007 / NBRC 100824 / MB4) (Thermoanaerobacter tengcongensis).